A 364-amino-acid polypeptide reads, in one-letter code: MKRREVLNTAAIATATTALVSCTQTNTSSVQAGLPNVRWRMTTSWPKSLGTFIGAETVAKRVAEMTNGRFKITPFAAGELVPGLQVLDAVQAGTVECGHTSSYYYIGKSPALAFATSVPFGLNAQQQYAWLYQGGGLAAIQKIYANFNVINFPAGSTGAQMGGWFKKEIKSVSDLKGLKMRIPGLGGQVMSRLGVNVQVLPGGEIYLALDRGAIDAAEWVGPYDDEKLGLNKAAQFYYYPGWWEPGPTLDVLVNLNAWNRLPKEYQEIFKTATVEANLTMLNQYDALNGEALTRLLAGGTKLVPYSQEIMQAAQKISFDIFEENASKDAAFKQVYEQWKAFRKQIFAWNRVNELSYENFASSSQ.

An N-terminal signal peptide occupies residues 1-26; it reads MKRREVLNTAAIATATTALVSCTQTN. Residues 103–104, Gln-160, and Arg-181 each bind substrate; that span reads YY. Residue Gln-160 participates in Na(+) binding. 3 residues coordinate Na(+): Glu-218, Trp-219, and Glu-244.

It belongs to the bacterial solute-binding protein 7 family. In terms of assembly, homodimer. The complex comprises the extracytoplasmic solute receptor protein all3028, and the two putative transmembrane proteins alr3026 and alr3027.

The protein resides in the periplasm. Pyruvate uptake inhibited by 2-oxobutyrate, 2-oxovalerate, 2-oxoisovalerate, 2-oxoisocaproate and 2-oxo-3-methylvalerate. Its function is as follows. Part of the tripartite ATP-independent periplasmic (TRAP) transport system involved in the uptake of monocarboxylate 2-oxoacids. This protein specifically binds monocarboxylate 2-oxoacids including pyruvate, 2-oxobutyrate, 2-oxovalerate, 2-oxoisovalerate, 2-oxoisocaproate and 2-oxo-3-methylvalerate. Is not able to bind mannitol. The chain is Monocarboxylate 2-oxoacid-binding periplasmic protein all3028 from Nostoc sp. (strain PCC 7120 / SAG 25.82 / UTEX 2576).